A 401-amino-acid chain; its full sequence is Argininosuccinate synthase (401 aa).

8 to 16 (AYSGGLDTS) provides a ligand contact to ATP. An L-citrulline-binding site is contributed by Tyr-85. Gly-115 provides a ligand contact to ATP. Residues Thr-117, Asn-121, and Asp-122 each contribute to the L-aspartate site. An L-citrulline-binding site is contributed by Asn-121. Residues Arg-125, Ser-173, Glu-258, and Tyr-270 each contribute to the L-citrulline site.

This sequence belongs to the argininosuccinate synthase family. Type 1 subfamily. Homotetramer.

The protein localises to the cytoplasm. The enzyme catalyses L-citrulline + L-aspartate + ATP = 2-(N(omega)-L-arginino)succinate + AMP + diphosphate + H(+). It functions in the pathway amino-acid biosynthesis; L-arginine biosynthesis; L-arginine from L-ornithine and carbamoyl phosphate: step 2/3. The sequence is that of Argininosuccinate synthase from Staphylococcus aureus (strain MSSA476).